Consider the following 245-residue polypeptide: tRNA1(Val) (adenine(37)-N6)-methyltransferase (245 aa).

It belongs to the methyltransferase superfamily. tRNA (adenine-N(6)-)-methyltransferase family.

Its subcellular location is the cytoplasm. It carries out the reaction adenosine(37) in tRNA1(Val) + S-adenosyl-L-methionine = N(6)-methyladenosine(37) in tRNA1(Val) + S-adenosyl-L-homocysteine + H(+). In terms of biological role, specifically methylates the adenine in position 37 of tRNA(1)(Val) (anticodon cmo5UAC). This is tRNA1(Val) (adenine(37)-N6)-methyltransferase (yfiC) from Escherichia coli (strain K12).